The sequence spans 242 residues: Uridylate kinase (242 aa).

K17–G20 is an ATP binding site. Residue G59 coordinates UMP. Residues G60 and R64 each coordinate ATP. UMP is bound by residues D79 and T140–T147. Residues T167, Y173, and D176 each contribute to the ATP site.

Belongs to the UMP kinase family. Homohexamer.

It localises to the cytoplasm. The catalysed reaction is UMP + ATP = UDP + ADP. It functions in the pathway pyrimidine metabolism; CTP biosynthesis via de novo pathway; UDP from UMP (UMPK route): step 1/1. With respect to regulation, inhibited by UTP. Its function is as follows. Catalyzes the reversible phosphorylation of UMP to UDP. In Marinobacter nauticus (strain ATCC 700491 / DSM 11845 / VT8) (Marinobacter aquaeolei), this protein is Uridylate kinase.